Reading from the N-terminus, the 65-residue chain is UPF0434 protein bsr0601 (65 aa).

This sequence belongs to the UPF0434 family.

The polypeptide is UPF0434 protein bsr0601 (Bradyrhizobium diazoefficiens (strain JCM 10833 / BCRC 13528 / IAM 13628 / NBRC 14792 / USDA 110)).